Here is a 799-residue protein sequence, read N- to C-terminus: Putative mRNA-capping enzyme P5 (799 aa).

This sequence belongs to the phytoreovirus protein P5 family.

Its subcellular location is the virion. The protein localises to the host cytoplasm. The catalysed reaction is a 5'-end diphospho-ribonucleoside in mRNA + GTP + H(+) = a 5'-end (5'-triphosphoguanosine)-ribonucleoside in mRNA + diphosphate. It functions in the pathway mRNA processing; mRNA capping. Enzyme involved in mRNA capping (Potential). Binds to GTP and might have guanylyltransferase activity. Together with the RNA-directed RNA polymerase P1 and protein P7, forms an transcriptional complex positioned near the channels situated at each of the five-fold vertices of the core. The protein is Putative mRNA-capping enzyme P5 of Nephotettix cincticeps (Green rice leafhopper).